Here is a 158-residue protein sequence, read N- to C-terminus: Putative 4-hydroxy-4-methyl-2-oxoglutarate aldolase (158 aa).

Residues 75–78 and Arg97 contribute to the substrate site; that span reads GDLI. An a divalent metal cation-binding site is contributed by Asp98.

It belongs to the class II aldolase/RraA-like family. In terms of assembly, homotrimer. A divalent metal cation is required as a cofactor.

The catalysed reaction is 4-hydroxy-4-methyl-2-oxoglutarate = 2 pyruvate. It catalyses the reaction oxaloacetate + H(+) = pyruvate + CO2. Its function is as follows. Catalyzes the aldol cleavage of 4-hydroxy-4-methyl-2-oxoglutarate (HMG) into 2 molecules of pyruvate. Also contains a secondary oxaloacetate (OAA) decarboxylase activity due to the common pyruvate enolate transition state formed following C-C bond cleavage in the retro-aldol and decarboxylation reactions. The polypeptide is Putative 4-hydroxy-4-methyl-2-oxoglutarate aldolase (Saccharopolyspora erythraea (strain ATCC 11635 / DSM 40517 / JCM 4748 / NBRC 13426 / NCIMB 8594 / NRRL 2338)).